The primary structure comprises 260 residues: MFDIGVNLTSSQFAKDRDDVVARAFAAGVKGMLLTGTNIHESQQALKLARRYPHCWSTAGVHPHDSSQWSPASEDAIIALANQPEVVAIGECGLDFNRNFSTPQEQERAFQAQLQIAAELQIPIFMHCRDAHERFLVLLDPWLDSLPGAILHCFTGSRQQMQACVDRGLYIGITGWVCDERRGLELRELLPFIPAEKLLIETDAPYLLPRDLTPKPTSRRNEPAYLPHILERIALWRGEDPQWLAAMTDANARTLFEVVF.

Residues E91, H127, and H152 each contribute to the a divalent metal cation site.

This sequence belongs to the metallo-dependent hydrolases superfamily. TatD-type hydrolase family. TatD subfamily. Monomer. It depends on Mg(2+) as a cofactor.

The protein localises to the cytoplasm. Its function is as follows. 3'-5' exonuclease that prefers single-stranded DNA and RNA. May play a role in the H(2)O(2)-induced DNA damage repair. The sequence is that of 3'-5' ssDNA/RNA exonuclease TatD from Salmonella typhimurium (strain LT2 / SGSC1412 / ATCC 700720).